We begin with the raw amino-acid sequence, 440 residues long: Serine hydroxymethyltransferase (440 aa).

(6S)-5,6,7,8-tetrahydrofolate-binding positions include L119 and 123–125 (GHL). K228 carries the post-translational modification N6-(pyridoxal phosphate)lysine. 370–372 (SPF) lines the (6S)-5,6,7,8-tetrahydrofolate pocket.

The protein belongs to the SHMT family. Homodimer. It depends on pyridoxal 5'-phosphate as a cofactor.

It localises to the cytoplasm. It carries out the reaction (6R)-5,10-methylene-5,6,7,8-tetrahydrofolate + glycine + H2O = (6S)-5,6,7,8-tetrahydrofolate + L-serine. It functions in the pathway one-carbon metabolism; tetrahydrofolate interconversion. Its pathway is amino-acid biosynthesis; glycine biosynthesis; glycine from L-serine: step 1/1. Its function is as follows. Catalyzes the reversible interconversion of serine and glycine with tetrahydrofolate (THF) serving as the one-carbon carrier. This reaction serves as the major source of one-carbon groups required for the biosynthesis of purines, thymidylate, methionine, and other important biomolecules. Also exhibits THF-independent aldolase activity toward beta-hydroxyamino acids, producing glycine and aldehydes, via a retro-aldol mechanism. This chain is Serine hydroxymethyltransferase, found in Chlorobium luteolum (strain DSM 273 / BCRC 81028 / 2530) (Pelodictyon luteolum).